The following is a 150-amino-acid chain: uncharacterized protein (150 aa).

Transmembrane regions (helical) follow at residues 48–68 (LFLL…CFLF), 89–109 (VFIF…YLLP), and 123–143 (REVF…IFTL).

This sequence to M.pneumoniae MPN_085 central region.

Its subcellular location is the cell membrane. This is an uncharacterized protein from Mycoplasma pneumoniae (strain ATCC 29342 / M129 / Subtype 1) (Mycoplasmoides pneumoniae).